A 360-amino-acid polypeptide reads, in one-letter code: MQHAPLNFVPDAAKVPPTPGQSPNARWSREAIEALFALPFNDLLFQAQQVHRAHFDANAVQLSTLLSIKTGGCPEDCSYCPQSARYDTGVEAEKLMPIDTVLEAAARAKQNGASRFCMGAAWRNPKPHQLDAVADMVRGVKAMGLETCVTLGMLKQEQAQQLKDAGLDYYNHNLDTAPEFYGEIITTRTYQDRLDTLEHVRDAGINVCCGGIVGLGESRHERAGLVAELANMEPYPDSVPINNLVKVEGTPLAGNEALDPFEFVRTIAVARITMPKAMVRLSAGREAMDDALQALCFMAGANSIFYGEKLLTTDNPEADADRKLLARLGMRVEVQDHLHQAEGAQHSHSSHCHIDITPAD.

The tract at residues 1–25 is disordered; the sequence is MQHAPLNFVPDAAKVPPTPGQSPNA. In terms of domain architecture, Radical SAM core spans 58-285; the sequence is NAVQLSTLLS…KAMVRLSAGR (228 aa). Cys-73, Cys-77, and Cys-80 together coordinate [4Fe-4S] cluster. Cys-117, Cys-148, Cys-208, and Arg-280 together coordinate [2Fe-2S] cluster. Positions 340 to 360 are disordered; the sequence is QAEGAQHSHSSHCHIDITPAD.

The protein belongs to the radical SAM superfamily. Biotin synthase family. In terms of assembly, homodimer. [4Fe-4S] cluster serves as cofactor. [2Fe-2S] cluster is required as a cofactor.

The catalysed reaction is (4R,5S)-dethiobiotin + (sulfur carrier)-SH + 2 reduced [2Fe-2S]-[ferredoxin] + 2 S-adenosyl-L-methionine = (sulfur carrier)-H + biotin + 2 5'-deoxyadenosine + 2 L-methionine + 2 oxidized [2Fe-2S]-[ferredoxin]. Its pathway is cofactor biosynthesis; biotin biosynthesis; biotin from 7,8-diaminononanoate: step 2/2. Functionally, catalyzes the conversion of dethiobiotin (DTB) to biotin by the insertion of a sulfur atom into dethiobiotin via a radical-based mechanism. The chain is Biotin synthase from Ralstonia nicotianae (strain ATCC BAA-1114 / GMI1000) (Ralstonia solanacearum).